A 428-amino-acid chain; its full sequence is Histone deacetylase 3 (428 aa).

The histone deacetylase stretch occupies residues 3-316 (KTVAYFYDPD…WTYETSLLVE (314 aa)). Residues histidine 17, glycine 21, and lysine 25 each contribute to the 1D-myo-inositol 1,4,5,6-tetrakisphosphate site. Residue histidine 135 is part of the active site. Residues aspartate 170, histidine 172, and aspartate 259 each coordinate Zn(2+). Arginine 265 is a binding site for 1D-myo-inositol 1,4,5,6-tetrakisphosphate. Composition is skewed to basic and acidic residues over residues 388–405 (DRTD…ENYS) and 415–428 (DGDH…DVEI). The disordered stretch occupies residues 388–428 (DRTDEADAEERGPEENYSRPEAPNEFYDGDHDNDKESDVEI). Serine 424 bears the Phosphoserine mark.

It belongs to the histone deacetylase family. HD type 1 subfamily. Interacts with HDAC7 and HDAC9. Interacts with HDAC10, DAXX and DACH1. Found in a complex with NCOR1 and NCOR2. Component of the N-Cor repressor complex, at least composed of NCOR1, NCOR2, HDAC3, TBL1X, TBL1R, CORO2A and GPS2. Interacts with BCOR, MJD2A/JHDM3A, NRIP1, PRDM6 and SRY. Interacts with BTBD14B. Interacts with GLIS2. Interacts (via the DNA-binding domain) with NR2C1; the interaction recruits phosphorylated NR2C1 to PML bodies for sumoylation. Component of the Notch corepressor complex. Interacts with CBFA2T3 and NKAP. Interacts with APEX1; the interaction is not dependent on the acetylated status of APEX1. Interacts with and deacetylates MAPK14. Interacts with ZMYND15. Interacts with SMRT/NCOR2 and BCL6 on DNA enhancer elements. Interacts with INSM1. Interacts with XBP1; the interaction occurs in endothelial cell (EC) under disturbed flow. Interacts (via C-terminus) with CCAR2 (via N-terminus). Interacts with and deacetylates MEF2D. Interacts with BEND3. Interacts with NKAPL. Interacts with DHX36; this interaction occurs in a RNA-dependent manner. Interacts weakly with CRY1; this interaction is enhanced in the presence of FBXL3. Interacts with FBXL3 and BMAL1. Interacts with NCOR1. Interacts with RARA. Interacts with SETD5. Post-translationally, deubiquitinated on 'Lys-63'-linked ubiquitin chains by USP38; leading to a decreased level of histone acetylation. Sumoylated in vitro.

It localises to the nucleus. The protein resides in the chromosome. It is found in the cytoplasm. Its subcellular location is the cytosol. The enzyme catalyses N(6)-acetyl-L-lysyl-[histone] + H2O = L-lysyl-[histone] + acetate. It catalyses the reaction N(6)-acetyl-L-lysyl-[protein] + H2O = L-lysyl-[protein] + acetate. The catalysed reaction is N(6)-(2E)-butenoyl-L-lysyl-[protein] + H2O = (2E)-2-butenoate + L-lysyl-[protein]. It carries out the reaction N(6)-(2-hydroxyisobutanoyl)-L-lysyl-[protein] + H2O = 2-hydroxy-2-methylpropanoate + L-lysyl-[protein]. The enzyme catalyses N(6)-[(S)-lactoyl]-L-lysyl-[protein] + H2O = (S)-lactate + L-lysyl-[protein]. Inositol tetraphosphate (1D-myo-inositol 1,4,5,6-tetrakisphosphate) promotes the histone deacetylase activity by acting as an intermolecular glue between HDAC3 and NCOR2, thereby promoting its association with the N-Cor complex, a prerequisite for the histone deacetylase activity. Histone deacetylase that catalyzes the deacetylation of lysine residues on the N-terminal part of the core histones (H2A, H2B, H3 and H4), and some other non-histone substrates. Histone deacetylation gives a tag for epigenetic repression and plays an important role in transcriptional regulation, cell cycle progression and developmental events. Histone deacetylases act via the formation of large multiprotein complexes, such as N-Cor repressor complex, which activate the histone deacetylase activity. Participates in the BCL6 transcriptional repressor activity by deacetylating the H3 'Lys-27' (H3K27) on enhancer elements, antagonizing EP300 acetyltransferase activity and repressing proximal gene expression. Acts as a molecular chaperone for shuttling phosphorylated NR2C1 to PML bodies for sumoylation. Contributes, together with XBP1 isoform 1, to the activation of NFE2L2-mediated HMOX1 transcription factor gene expression in a PI(3)K/mTORC2/Akt-dependent signaling pathway leading to endothelial cell (EC) survival under disturbed flow/oxidative stress. Regulates both the transcriptional activation and repression phases of the circadian clock in a deacetylase activity-independent manner. During the activation phase, promotes the accumulation of ubiquitinated BMAL1 at the E-boxes and during the repression phase, blocks FBXL3-mediated CRY1/2 ubiquitination and promotes the interaction of CRY1 and BMAL1. The NCOR1-HDAC3 complex regulates the circadian expression of the core clock gene BMAL1 and the genes involved in lipid metabolism in the liver. Also functions as a deacetylase for non-histone targets, such as KAT5, MEF2D, MAPK14, RARA and STAT3. Serves as a corepressor of RARA, mediating its deacetylation and repression, leading to inhibition of RARE DNA element binding. In association with RARA, plays a role in the repression of microRNA-10a and thereby in the inflammatory response. In addition to protein deacetylase activity, also acts as a protein-lysine deacylase by recognizing other acyl groups: catalyzes removal of (2E)-butenoyl (crotonyl), lactoyl (lactyl) and 2-hydroxyisobutanoyl (2-hydroxyisobutyryl) acyl groups from lysine residues, leading to protein decrotonylation, delactylation and de-2-hydroxyisobutyrylation, respectively. Catalyzes decrotonylation of MAPRE1/EB1. Mediates delactylation NBN/NBS1, thereby inhibiting DNA double-strand breaks (DSBs) via homologous recombination (HR). The sequence is that of Histone deacetylase 3 (HDAC3) from Pongo abelii (Sumatran orangutan).